Consider the following 230-residue polypeptide: Ribose-5-phosphate isomerase A (230 aa).

Substrate contacts are provided by residues 32–35, 85–88, and 98–101; these read TGST, DGAD, and KGGG. Glu-107 acts as the Proton acceptor in catalysis. Lys-125 lines the substrate pocket.

The protein belongs to the ribose 5-phosphate isomerase family. Homodimer.

It catalyses the reaction aldehydo-D-ribose 5-phosphate = D-ribulose 5-phosphate. It functions in the pathway carbohydrate degradation; pentose phosphate pathway; D-ribose 5-phosphate from D-ribulose 5-phosphate (non-oxidative stage): step 1/1. Catalyzes the reversible conversion of ribose-5-phosphate to ribulose 5-phosphate. The chain is Ribose-5-phosphate isomerase A from Burkholderia ambifaria (strain ATCC BAA-244 / DSM 16087 / CCUG 44356 / LMG 19182 / AMMD) (Burkholderia cepacia (strain AMMD)).